The following is an 843-amino-acid chain: Protein P (843 aa).

A terminal protein domain (TP) region spans residues Met-1–Gln-177. Residues Glu-178–Leu-346 are spacer. Disordered regions lie at residues Gln-180 to Ser-221 and Arg-282 to Arg-313. Positions Ser-196–Ser-221 are enriched in polar residues. Positions Glu-347–Gln-690 are polymerase/reverse transcriptase domain (RT). The Reverse transcriptase domain maps to Gln-357–Ile-600. Mg(2+) contacts are provided by Asp-429, Asp-551, and Asp-552.

This sequence belongs to the hepadnaviridae P protein family.

The enzyme catalyses DNA(n) + a 2'-deoxyribonucleoside 5'-triphosphate = DNA(n+1) + diphosphate. It carries out the reaction Endonucleolytic cleavage to 5'-phosphomonoester.. Activated by host HSP70 and HSP40 in vitro to be able to bind the epsilon loop of the pgRNA. Because deletion of the RNase H region renders the protein partly chaperone-independent, the chaperones may be needed indirectly to relieve occlusion of the RNA-binding site by this domain. Inhibited by several reverse-transcriptase inhibitors: Lamivudine, Adefovir and Entecavir. In terms of biological role, multifunctional enzyme that converts the viral RNA genome into dsDNA in viral cytoplasmic capsids. This enzyme displays a DNA polymerase activity that can copy either DNA or RNA templates, and a ribonuclease H (RNase H) activity that cleaves the RNA strand of RNA-DNA heteroduplexes in a partially processive 3'- to 5'-endonucleasic mode. Neo-synthesized pregenomic RNA (pgRNA) are encapsidated together with the P protein, and reverse-transcribed inside the nucleocapsid. Initiation of reverse-transcription occurs first by binding the epsilon loop on the pgRNA genome, and is initiated by protein priming, thereby the 5'-end of (-)DNA is covalently linked to P protein. Partial (+)DNA is synthesized from the (-)DNA template and generates the relaxed circular DNA (RC-DNA) genome. After budding and infection, the RC-DNA migrates in the nucleus, and is converted into a plasmid-like covalently closed circular DNA (cccDNA). The activity of P protein does not seem to be necessary for cccDNA generation, and is presumably released from (+)DNA by host nuclear DNA repair machinery. This Homo sapiens (Human) protein is Protein P.